Reading from the N-terminus, the 862-residue chain is Rho guanine nucleotide exchange factor 7 (862 aa).

Residues methionine 1 to alanine 112 enclose the Calponin-homology (CH) domain. Serine 132, serine 155, serine 164, serine 228, and serine 236 each carry phosphoserine. Residues asparagine 163 to proline 222 form the SH3 domain. One can recognise a DH domain in the interval tyrosine 250–valine 430. The PH domain occupies aspartate 452–lysine 557. Serine 497 carries the phosphoserine modification. Disordered stretches follow at residues threonine 559–lysine 591, lysine 657–valine 679, and aspartate 728–aspartate 748. Positions proline 572–serine 585 are enriched in polar residues. Positions lysine 657–glutamate 669 are enriched in basic residues. Residues arginine 670 to valine 679 show a composition bias toward basic and acidic residues. Serine 673 bears the Phosphoserine mark. The segment covering serine 731–leucine 744 has biased composition (low complexity). Residue serine 776 is modified to Phosphoserine. Residues lysine 804–aspartate 854 adopt a coiled-coil conformation.

As to quaternary structure, interacts with PAK kinases through the SH3 domain. Interacts with unphosphorylated PAK1. Interacts with ITCH. Interacts with SCRIB; interaction is direct and may play a role in regulation of apoptosis. Interacts with GIT1 and TGFB1I1. Interacts with FRMPD4 (via N-terminus). Interacts with CaMK1. Interacts with BIN2. Interacts with PTK2/FAK1 and RAC1. Interacts with PARVB. Interacts with YWHAZ. Interacts (via PH domain) with NOX1 (via FAD-binding FR-type domain). In terms of processing, phosphorylated on Ser-673 by CaMK1; enhancement of GEF activity and downstream activation of RAC1. Phosphorylated by PTK2/FAK1; this promotes interaction with RAC1. In terms of tissue distribution, seems to be expressed in the central nervous system. Isoform B, isoform C and isoform E are expressed with highest levels in brain and testis.

Its subcellular location is the cell junction. It localises to the focal adhesion. The protein localises to the cell projection. The protein resides in the ruffle. It is found in the cytoplasm. Its subcellular location is the cell cortex. It localises to the lamellipodium. Acts as a RAC1 guanine nucleotide exchange factor (GEF) and can induce membrane ruffling. May function as a positive regulator of apoptosis. Functions in cell migration, attachment and cell spreading. Promotes targeting of RAC1 to focal adhesions. Downstream of NMDA receptors and CaMKK-CaMK1 signaling cascade, promotes the formation of spines and synapses in hippocampal neurons. The sequence is that of Rho guanine nucleotide exchange factor 7 (Arhgef7) from Mus musculus (Mouse).